The primary structure comprises 161 residues: 2-C-methyl-D-erythritol 2,4-cyclodiphosphate synthase (161 aa).

Residues Asp13 and His15 each contribute to the a divalent metal cation site. 4-CDP-2-C-methyl-D-erythritol 2-phosphate-binding positions include Asp13–His15 and His40–Ser41. An a divalent metal cation-binding site is contributed by His48. Position 62–64 (Asp62–Gly64) interacts with 4-CDP-2-C-methyl-D-erythritol 2-phosphate.

This sequence belongs to the IspF family. As to quaternary structure, homotrimer. A divalent metal cation is required as a cofactor.

It carries out the reaction 4-CDP-2-C-methyl-D-erythritol 2-phosphate = 2-C-methyl-D-erythritol 2,4-cyclic diphosphate + CMP. Its pathway is isoprenoid biosynthesis; isopentenyl diphosphate biosynthesis via DXP pathway; isopentenyl diphosphate from 1-deoxy-D-xylulose 5-phosphate: step 4/6. Functionally, involved in the biosynthesis of isopentenyl diphosphate (IPP) and dimethylallyl diphosphate (DMAPP), two major building blocks of isoprenoid compounds. Catalyzes the conversion of 4-diphosphocytidyl-2-C-methyl-D-erythritol 2-phosphate (CDP-ME2P) to 2-C-methyl-D-erythritol 2,4-cyclodiphosphate (ME-CPP) with a corresponding release of cytidine 5-monophosphate (CMP). The sequence is that of 2-C-methyl-D-erythritol 2,4-cyclodiphosphate synthase from Deinococcus radiodurans (strain ATCC 13939 / DSM 20539 / JCM 16871 / CCUG 27074 / LMG 4051 / NBRC 15346 / NCIMB 9279 / VKM B-1422 / R1).